A 226-amino-acid chain; its full sequence is Eukaryotic translation initiation factor 3 subunit K (226 aa).

In terms of domain architecture, PCI spans 44 to 202 (YSLEVNLCLL…IVLPQNEFNH (159 aa)).

Belongs to the eIF-3 subunit K family. As to quaternary structure, component of the eukaryotic translation initiation factor 3 (eIF-3) complex.

Its subcellular location is the cytoplasm. In terms of biological role, component of the eukaryotic translation initiation factor 3 (eIF-3) complex, which is involved in protein synthesis of a specialized repertoire of mRNAs and, together with other initiation factors, stimulates binding of mRNA and methionyl-tRNAi to the 40S ribosome. The eIF-3 complex specifically targets and initiates translation of a subset of mRNAs involved in cell proliferation. This is Eukaryotic translation initiation factor 3 subunit K (TIF3K1) from Arabidopsis thaliana (Mouse-ear cress).